The sequence spans 150 residues: UPF0260 protein VIBHAR_03078 (150 aa).

Belongs to the UPF0260 family.

This chain is UPF0260 protein VIBHAR_03078, found in Vibrio campbellii (strain ATCC BAA-1116).